The following is a 301-amino-acid chain: 4-hydroxybenzoate octaprenyltransferase (301 aa).

8 helical membrane-spanning segments follow: residues 34-54 (IGSL…ADGL), 57-77 (LWTL…GCVI), 108-128 (LWVF…LNWL), 152-172 (LPQV…FAAV), 176-196 (VPLL…AYDT), 221-241 (FDLI…VLVG), 245-265 (DLGV…AYEF), and 279-299 (AFLH…VAVA).

The protein belongs to the UbiA prenyltransferase family. Requires Mg(2+) as cofactor.

It localises to the cell inner membrane. It carries out the reaction all-trans-octaprenyl diphosphate + 4-hydroxybenzoate = 4-hydroxy-3-(all-trans-octaprenyl)benzoate + diphosphate. Its pathway is cofactor biosynthesis; ubiquinone biosynthesis. In terms of biological role, catalyzes the prenylation of para-hydroxybenzoate (PHB) with an all-trans polyprenyl group. Mediates the second step in the final reaction sequence of ubiquinone-8 (UQ-8) biosynthesis, which is the condensation of the polyisoprenoid side chain with PHB, generating the first membrane-bound Q intermediate 3-octaprenyl-4-hydroxybenzoate. The chain is 4-hydroxybenzoate octaprenyltransferase from Xanthomonas euvesicatoria pv. vesicatoria (strain 85-10) (Xanthomonas campestris pv. vesicatoria).